We begin with the raw amino-acid sequence, 120 residues long: Flagellar protein FliT (120 aa).

Positions 1–50 (MERHQHLLSEYQQILTLSEQMLMLATVENWNTLVDLEMTYLKAVENTANI) are required for homodimerization. The interval 60 to 98 (LQELLRQKLRSILENEIEIKRLLQRRLDKLSELVGQSTR) is fliD binding.

Belongs to the FliT family. Homodimer. Interacts with FliD and FlhC.

The protein resides in the cytoplasm. Its subcellular location is the cytosol. Its function is as follows. Dual-function protein that regulates the transcription of class 2 flagellar operons and that also acts as an export chaperone for the filament-capping protein FliD. As a transcriptional regulator, acts as an anti-FlhDC factor; it directly binds FlhC, thus inhibiting the binding of the FlhC/FlhD complex to class 2 promoters, resulting in decreased expression of class 2 flagellar operons. As a chaperone, effects FliD transition to the membrane by preventing its premature polymerization, and by directing it to the export apparatus. The sequence is that of Flagellar protein FliT from Yersinia pestis (strain Pestoides F).